The sequence spans 393 residues: tRNA-specific 2-thiouridylase MnmA (393 aa).

Residues 19–26 (AMSGGVDS) and leucine 45 contribute to the ATP site. Catalysis depends on cysteine 113, which acts as the Nucleophile. Cysteine 113 and cysteine 210 are disulfide-bonded. Glycine 137 contacts ATP. An interaction with tRNA region spans residues 160-162 (RDQ). Cysteine 210 functions as the Cysteine persulfide intermediate in the catalytic mechanism.

This sequence belongs to the MnmA/TRMU family.

It is found in the cytoplasm. The catalysed reaction is S-sulfanyl-L-cysteinyl-[protein] + uridine(34) in tRNA + AH2 + ATP = 2-thiouridine(34) in tRNA + L-cysteinyl-[protein] + A + AMP + diphosphate + H(+). Its function is as follows. Catalyzes the 2-thiolation of uridine at the wobble position (U34) of tRNA, leading to the formation of s(2)U34. This chain is tRNA-specific 2-thiouridylase MnmA, found in Afipia carboxidovorans (strain ATCC 49405 / DSM 1227 / KCTC 32145 / OM5) (Oligotropha carboxidovorans).